The chain runs to 471 residues: Putative multidrug resistance protein MdtD (471 aa).

At 1–11 (MTDLPDSTRWQ) the chain is on the periplasmic side. The helical transmembrane segment at 12–32 (LWIVAFGFFMQSLDTTIVNTA) threads the bilayer. The Cytoplasmic segment spans residues 33–48 (LPSMAQSLGESPLHMH). Residues 49–69 (MVIVSYVLTVAVMLPASGWLA) form a helical membrane-spanning segment. Residues 70–76 (DKVGVRN) are Periplasmic-facing. A helical membrane pass occupies residues 77-97 (IFFTAIVLFTLGSLFCALSGT). Over 98 to 101 (LNEL) the chain is Cytoplasmic. A helical transmembrane segment spans residues 102 to 124 (LLARALQGVGGAMMVPVGRLTVM). Residues 125–137 (KIVPREQYMAAMT) are Periplasmic-facing. Residues 138 to 158 (FVTLPGQVGPLLGPALGGLLV) form a helical membrane-spanning segment. Topologically, residues 159 to 164 (EYASWH) are cytoplasmic. A helical transmembrane segment spans residues 165-185 (WIFLINIPVGIIGAIATLMLM). Topologically, residues 186 to 196 (PNYTMQTRRFD) are periplasmic. A helical transmembrane segment spans residues 197-217 (LSGFLLLAVGMAVLTLALDGS). Residues 218–224 (KGTGLSP) are Cytoplasmic-facing. Residues 225–245 (LAIAGLVAVGVVALVLYLLHA) traverse the membrane as a helical segment. At 246-262 (RNNNRALFSLKLFRTRT) the chain is on the periplasmic side. The chain crosses the membrane as a helical span at residues 263–283 (FSLGLAGSFAGRIGSGMLPFM). The Cytoplasmic segment spans residues 284–285 (TP). A helical transmembrane segment spans residues 286–306 (VFLQIGLGFSPFHAGLMMIPM). Residues 307–341 (VLGSMGMKRIVVQVVNRFGYRRVLVATTLGLSLVT) lie on the Periplasmic side of the membrane. A helical transmembrane segment spans residues 342–362 (LLFMTTALLGWYYVLPFVLFL). Residues 363–395 (QGMVNSTRFSSMNTLTLKDLPDNLASSGNSLLS) lie on the Cytoplasmic side of the membrane. Residues 396–416 (MIMQLSMSIGVTIAGLLLGLF) form a helical membrane-spanning segment. Topologically, residues 417-430 (GSQHVSVDSGTTQT) are periplasmic. The helical transmembrane segment at 431 to 451 (VFMYTWLSMAFIIALPAFIFA) threads the bilayer. Topologically, residues 452 to 471 (RVPNDTHQNVAISRRKRSAQ) are cytoplasmic.

This sequence belongs to the major facilitator superfamily. TCR/Tet family.

It is found in the cell inner membrane. The polypeptide is Putative multidrug resistance protein MdtD (Escherichia coli (strain SMS-3-5 / SECEC)).